Here is a 417-residue protein sequence, read N- to C-terminus: NADH-quinone oxidoreductase subunit D (417 aa).

Belongs to the complex I 49 kDa subunit family. As to quaternary structure, NDH-1 is composed of 14 different subunits. Subunits NuoB, C, D, E, F, and G constitute the peripheral sector of the complex.

The protein resides in the cell inner membrane. It catalyses the reaction a quinone + NADH + 5 H(+)(in) = a quinol + NAD(+) + 4 H(+)(out). In terms of biological role, NDH-1 shuttles electrons from NADH, via FMN and iron-sulfur (Fe-S) centers, to quinones in the respiratory chain. The immediate electron acceptor for the enzyme in this species is believed to be ubiquinone. Couples the redox reaction to proton translocation (for every two electrons transferred, four hydrogen ions are translocated across the cytoplasmic membrane), and thus conserves the redox energy in a proton gradient. This chain is NADH-quinone oxidoreductase subunit D, found in Polaromonas naphthalenivorans (strain CJ2).